The chain runs to 134 residues: Cilia- and flagella-associated protein 144 (134 aa).

The segment at 76–95 (QGPRKKYPETQTENQEVGWD) is disordered.

The protein belongs to the CFAP144 family. Microtubule inner protein component of sperm flagellar doublet microtubules.

Its subcellular location is the cytoplasm. The protein localises to the cytoskeleton. It localises to the cilium axoneme. The protein resides in the flagellum axoneme. Its function is as follows. Microtubule inner protein (MIP) part of the dynein-decorated doublet microtubules (DMTs) in cilia axoneme, which is required for motile cilia beating. This chain is Cilia- and flagella-associated protein 144, found in Homo sapiens (Human).